The primary structure comprises 221 residues: PKHD-type hydroxylase P9215_13741 (221 aa).

The Fe2OG dioxygenase domain maps to 80 to 174 (RIHGTMFTKT…RFVVVGWIES (95 aa)). 3 residues coordinate Fe cation: His-98, Asp-100, and His-155. 2-oxoglutarate is bound at residue Arg-165.

Requires Fe(2+) as cofactor. L-ascorbate serves as cofactor.

The chain is PKHD-type hydroxylase P9215_13741 from Prochlorococcus marinus (strain MIT 9215).